The primary structure comprises 107 residues: Phosphoribosyl-ATP pyrophosphatase (107 aa).

The protein belongs to the PRA-PH family.

The protein resides in the cytoplasm. It catalyses the reaction 1-(5-phospho-beta-D-ribosyl)-ATP + H2O = 1-(5-phospho-beta-D-ribosyl)-5'-AMP + diphosphate + H(+). It participates in amino-acid biosynthesis; L-histidine biosynthesis; L-histidine from 5-phospho-alpha-D-ribose 1-diphosphate: step 2/9. This is Phosphoribosyl-ATP pyrophosphatase from Azoarcus sp. (strain BH72).